The sequence spans 302 residues: Protoheme IX farnesyltransferase 1 (302 aa).

9 consecutive transmembrane segments (helical) span residues 30 to 50 (VVAL…PGAV), 52 to 72 (LQPL…AAAF), 102 to 122 (ALTF…TLVN), 124 to 144 (LTAW…TAYL), 152 to 172 (IVVG…SVTG), 178 to 198 (ALLL…ALAI), 224 to 244 (CILL…LVGM), 245 to 265 (CGPL…YKSW), and 282 to 302 (FSIY…YLWV).

It belongs to the UbiA prenyltransferase family. Protoheme IX farnesyltransferase subfamily.

The protein resides in the cell inner membrane. The enzyme catalyses heme b + (2E,6E)-farnesyl diphosphate + H2O = Fe(II)-heme o + diphosphate. The protein operates within porphyrin-containing compound metabolism; heme O biosynthesis; heme O from protoheme: step 1/1. Its function is as follows. Converts heme B (protoheme IX) to heme O by substitution of the vinyl group on carbon 2 of heme B porphyrin ring with a hydroxyethyl farnesyl side group. This Shewanella woodyi (strain ATCC 51908 / MS32) protein is Protoheme IX farnesyltransferase 1.